The sequence spans 584 residues: Breast carcinoma-amplified sequence 1 (584 aa).

3 disordered regions span residues 1–29 (MGNQ…NASA), 59–280 (VATS…AAAI), and 297–377 (PNKA…GKLF). Composition is skewed to polar residues over residues 59–69 (VATSSPETTEI) and 112–128 (ADSS…SNKA). Phosphoserine is present on residues serine 124 and serine 192. 3 stretches are compositionally biased toward basic and acidic residues: residues 186–226 (SKPK…KVDE), 238–252 (PAGK…KEGQ), and 300–311 (AETKKDPEDTGA). Serine 314 carries the post-translational modification Phosphoserine. The span at 314–354 (SPTTSADLKSDKANFTSQETQGAGKNSKGCNPSGHTQSVTT) shows a compositional bias: polar residues. Over residues 357–366 (PAKEGTKEKS) the composition is skewed to basic and acidic residues. Serine 381 and serine 399 each carry phosphoserine. The interval 415–584 (TVDLNEGDAA…VSIGPVGKSK (170 aa)) is disordered. Residues 428-439 (TEAKLKREESKP) are compositionally biased toward basic and acidic residues. Threonine 480 bears the Phosphothreonine mark. Residues 494–506 (KGKEGSSKDKKSA) show a composition bias toward basic and acidic residues. Polar residues predominate over residues 525 to 540 (CTEQATVDTNSLQNGD). Positions 541–550 (KLQKRPEKRQ) are enriched in basic and acidic residues. The residue at position 552 (serine 552) is a Phosphoserine. The tract at residues 565–584 (MLDAQVQTDPVSIGPVGKSK) is interacts with DYNLL1 and DYNLL2.

In terms of assembly, homodimer. Interacts with DYNLL1 and DYNLL2. In terms of tissue distribution, highly expressed in the brain and, more specifically, in oligodendrocytes (at protein level). Expressed in the prostate, and at lower levels in testis, intestine and colon. Overexpressed in most breast cancer cell lines and down-regulated in some colorectal tumors.

Its subcellular location is the cytoplasm. Its function is as follows. Required for myelination. This Homo sapiens (Human) protein is Breast carcinoma-amplified sequence 1 (BCAS1).